The following is a 224-amino-acid chain: Thymidylate kinase (224 aa).

7–14 (GIEGSGKS) contributes to the ATP binding site.

The protein belongs to the thymidylate kinase family.

It carries out the reaction dTMP + ATP = dTDP + ADP. Functionally, phosphorylation of dTMP to form dTDP in both de novo and salvage pathways of dTTP synthesis. The sequence is that of Thymidylate kinase from Nitratidesulfovibrio vulgaris (strain DP4) (Desulfovibrio vulgaris).